The sequence spans 314 residues: Olfactory receptor 5P76 (314 aa).

At Met-1–Val-28 the chain is on the extracellular side. An N-linked (GlcNAc...) asparagine glycan is attached at Asn-8. A helical transmembrane segment spans residues Val-29 to Ile-49. Residues Leu-50–Gln-57 are Cytoplasmic-facing. A helical transmembrane segment spans residues Leu-58–Ser-78. At Ser-79–Ile-102 the chain is on the extracellular side. An intrachain disulfide couples Cys-100 to Cys-192. The chain crosses the membrane as a helical span at residues Gln-103–Tyr-123. Topologically, residues Asp-124–Ser-136 are cytoplasmic. The helical transmembrane segment at Asn-137–Leu-157 threads the bilayer. At Asn-158–Ala-199 the chain is on the extracellular side. The chain crosses the membrane as a helical span at residues Val-200–Ser-220. The Cytoplasmic portion of the chain corresponds to Tyr-221–Ala-240. The chain crosses the membrane as a helical span at residues Phe-241–Ile-261. At Tyr-262 to Asn-274 the chain is on the extracellular side. A helical transmembrane segment spans residues Lys-275–Leu-295. The Cytoplasmic segment spans residues Arg-296–Ser-314.

Belongs to the G-protein coupled receptor 1 family.

The protein localises to the cell membrane. In terms of biological role, potential odorant receptor. The polypeptide is Olfactory receptor 5P76 (Mus musculus (Mouse)).